A 202-amino-acid chain; its full sequence is Probable thymidylate kinase (202 aa).

13 to 20 contributes to the ATP binding site; the sequence is GIDGSGKT.

It belongs to the thymidylate kinase family.

It catalyses the reaction dTMP + ATP = dTDP + ADP. In Picrophilus torridus (strain ATCC 700027 / DSM 9790 / JCM 10055 / NBRC 100828 / KAW 2/3), this protein is Probable thymidylate kinase.